We begin with the raw amino-acid sequence, 208 residues long: Uracil phosphoribosyltransferase (208 aa).

Residues arginine 78, arginine 103, and 130–138 each bind 5-phospho-alpha-D-ribose 1-diphosphate; that span reads DPMLATGGS. Uracil contacts are provided by residues isoleucine 193 and 198–200; that span reads GDA. Aspartate 199 provides a ligand contact to 5-phospho-alpha-D-ribose 1-diphosphate.

The protein belongs to the UPRTase family. Mg(2+) is required as a cofactor.

The catalysed reaction is UMP + diphosphate = 5-phospho-alpha-D-ribose 1-diphosphate + uracil. It functions in the pathway pyrimidine metabolism; UMP biosynthesis via salvage pathway; UMP from uracil: step 1/1. Its activity is regulated as follows. Allosterically activated by GTP. Its function is as follows. Catalyzes the conversion of uracil and 5-phospho-alpha-D-ribose 1-diphosphate (PRPP) to UMP and diphosphate. The protein is Uracil phosphoribosyltransferase of Tolumonas auensis (strain DSM 9187 / NBRC 110442 / TA 4).